Reading from the N-terminus, the 249-residue chain is MMEKPEGLKLIDENGRRIDGRKKYELRPIKMEVGVLKNANGSAYIEWGKNKIIAAVYGPRELHPKHLQRPDRAILRVRYNMAPFSVEERKKPGPDRRSIEISKVIKGALEPALILEMFPRTAIDVFIEVLQADAGTRVAGITAASLALADAGIPMRDLVAACAAGKIEGEIVLDLNKEEDNYGEADVPVAIMPLKNDITLLQMDGYLTKDEFIEAVKLAIKGAKAVYQKQREALKEKYLKIAQEVEGSE.

It belongs to the RNase PH family. Rrp41 subfamily. In terms of assembly, component of the archaeal exosome complex. Forms a hexameric ring-like arrangement composed of 3 Rrp41-Rrp42 heterodimers. The hexameric ring associates with a trimer of Rrp4 and/or Csl4 subunits.

Its subcellular location is the cytoplasm. Functionally, catalytic component of the exosome, which is a complex involved in RNA degradation. Has 3'-&gt;5' exoribonuclease activity. Can also synthesize heteromeric RNA-tails. This chain is Exosome complex component Rrp41, found in Pyrococcus abyssi (strain GE5 / Orsay).